The chain runs to 150 residues: Ribonuclease P protein subunit p21 (150 aa).

Position 2 is an N-acetylalanine (Ala-2). The Zn(2+) site is built by Cys-62, Cys-65, Cys-92, and Cys-95. The interval 121-150 (QADINPSEPLPNIADLPKENIQTQALNTSE) is disordered. Residues 140 to 150 (NIQTQALNTSE) show a composition bias toward polar residues.

Belongs to the eukaryotic/archaeal RNase P protein component 4 family. RNase P consists of a catalytic RNA moiety and about 10 protein subunits; POP1, POP4, POP5, POP7, RPP14, RPP21, RPP25, RPP30, RPP38 and RPP40. Within the RNase P complex, POP1, POP7 and RPP25 form the 'finger' subcomplex, POP5, RPP14, RPP40 and homodimeric RPP30 form the 'palm' subcomplex, and RPP21, POP4 and RPP38 form the 'wrist' subcomplex. All subunits of the RNase P complex interact with the catalytic RNA.

It localises to the nucleus. It is found in the nucleolus. Functionally, component of ribonuclease P, a ribonucleoprotein complex that generates mature tRNA molecules by cleaving their 5'-ends. The protein is Ribonuclease P protein subunit p21 (Rpp21) of Mus musculus (Mouse).